The following is an 82-amino-acid chain: uncharacterized protein (82 aa).

Helical transmembrane passes span 4 to 26 (IAVLFIVFGFPIVAGVFGIAGHF), 31 to 50 (FWVAPLIVLITSLILLVTLA), and 55 to 77 (SFIFWVVMYTAIALVTSVATLFL).

Its subcellular location is the cell membrane. This is an uncharacterized protein from Bacillus subtilis (strain 168).